Here is a 485-residue protein sequence, read N- to C-terminus: Protein disulfide isomerase-like 5-4 (485 aa).

The region spanning 114–263 (VPTGSEFHPG…LVAAMETYVA (150 aa)) is the Thioredoxin domain. Cys170 serves as the catalytic Nucleophile. Residues 444 to 464 (FSHFITNVCAIIGGVFTVAGI) form a helical membrane-spanning segment.

This sequence belongs to the protein disulfide isomerase family.

The protein localises to the membrane. Functionally, acts as a protein-folding catalyst that interacts with nascent polypeptides to catalyze the formation, isomerization, and reduction or oxidation of disulfide bonds. May play a role in storage protein biogenesis. In Oryza sativa subsp. japonica (Rice), this protein is Protein disulfide isomerase-like 5-4 (PDIL5-4).